The primary structure comprises 310 residues: 4-diphosphocytidyl-2-C-methyl-D-erythritol kinase (310 aa).

Lys-12 is a catalytic residue. 97–107 serves as a coordination point for ATP; that stretch reads PIGAGLAGGSS. Asp-139 is a catalytic residue.

Belongs to the GHMP kinase family. IspE subfamily.

The catalysed reaction is 4-CDP-2-C-methyl-D-erythritol + ATP = 4-CDP-2-C-methyl-D-erythritol 2-phosphate + ADP + H(+). The protein operates within isoprenoid biosynthesis; isopentenyl diphosphate biosynthesis via DXP pathway; isopentenyl diphosphate from 1-deoxy-D-xylulose 5-phosphate: step 3/6. In terms of biological role, catalyzes the phosphorylation of the position 2 hydroxy group of 4-diphosphocytidyl-2C-methyl-D-erythritol. This is 4-diphosphocytidyl-2-C-methyl-D-erythritol kinase from Synechococcus sp. (strain CC9311).